We begin with the raw amino-acid sequence, 24 residues long: Poly-His-poly-Gly peptide 1 (24 aa).

Positions 1-13 (EDDHHHHHHHHHG) are enriched in basic residues. The disordered stretch occupies residues 1–24 (EDDHHHHHHHHHGVGGGGGGGGGG). Residues 14 to 24 (VGGGGGGGGGG) show a composition bias toward gly residues.

As to expression, expressed by the venom gland.

It localises to the secreted. In terms of biological role, may serve as a metalloproteinase inhibitor during glandular storage. Their inhibition may be instantly disengaged, by dilution or physiochemical change, when venom is injected into tissue of the victim. In Atheris chlorechis (Western bush viper), this protein is Poly-His-poly-Gly peptide 1.